We begin with the raw amino-acid sequence, 1958 residues long: Echinoderm microtubule-associated protein-like 6 (1958 aa).

WD repeat units lie at residues 59 to 100 (GHND…TVSI), 104 to 145 (VHTH…LLAS), 148 to 187 (GHSD…LTAK), 195 to 233 (GDLQ…RTIQ), 235 to 273 (AHSA…TKID), 280 to 321 (GYKG…LILQ), 323 to 362 (HCEG…LIAR), 364 to 403 (NMEE…EVVH), 406 to 445 (DRKE…KKIG), and 561 to 601 (GHSA…VSNG). Residues 604-627 (ETTPQEGGADSYSEESDSDFSDVP) form a disordered region. Over residues 615-627 (YSEESDSDFSDVP) the composition is skewed to acidic residues. 10 WD repeats span residues 725 to 766 (GHDD…CLSL), 770 to 811 (HHQR…KIAT), 814 to 853 (GHKD…FTSK), 861 to 900 (GKLE…KTVK), 901 to 940 (AHDG…KTYA), 996 to 1035 (HMEG…RMLA), 1038 to 1077 (KLKK…DMLS), 1080 to 1120 (HRKE…RVGI), 1191 to 1230 (SDVT…QHAR), and 1236 to 1276 (GHSA…TQES). Positions 1322-1337 (KPHQQLKEVSMEERPP) are enriched in basic and acidic residues. Residues 1322 to 1352 (KPHQQLKEVSMEERPPVSRAAPQPEKLQKNN) are disordered. 10 WD repeats span residues 1412 to 1456 (EHTD…TLSM), 1460 to 1501 (FHTK…KVAS), 1504 to 1543 (GHLE…LLYK), 1553 to 1591 (AKMQ…RLVA), 1593 to 1638 (AHTG…CRAF), 1685 to 1724 (HMEG…LLNK), 1726 to 1767 (NLGH…GKKR), 1768 to 1807 (DRKS…SLNR), 1880 to 1919 (ADKA…KFAK), and 1925 to 1958 (GHSA…WRCL).

This sequence belongs to the WD repeat EMAP family.

Its subcellular location is the cytoplasm. It is found in the cytoskeleton. May modify the assembly dynamics of microtubules, such that microtubules are slightly longer, but more dynamic. The protein is Echinoderm microtubule-associated protein-like 6 (Eml6) of Mus musculus (Mouse).